Here is a 45-residue protein sequence, read N- to C-terminus: Large ribosomal subunit protein bL34 (45 aa).

The disordered stretch occupies residues 22-45; the sequence is RMRTKSGQNVIKARRRKGRARLTV. A compositionally biased stretch (basic residues) spans 33-45; it reads KARRRKGRARLTV.

This sequence belongs to the bacterial ribosomal protein bL34 family.

This is Large ribosomal subunit protein bL34 from Thermosynechococcus vestitus (strain NIES-2133 / IAM M-273 / BP-1).